Here is a 197-residue protein sequence, read N- to C-terminus: Rac-like GTP-binding protein RHO1 (197 aa).

G13–T20 provides a ligand contact to GTP. Residues Y35–F43 carry the Effector region motif. Residues D60–Q64 and T118–D121 each bind GTP. A Cysteine methyl ester modification is found at C194. The S-geranylgeranyl cysteine moiety is linked to residue C194. Residues S195 to L197 constitute a propeptide, removed in mature form.

The protein belongs to the small GTPase superfamily. Rho family. In terms of tissue distribution, expressed at the tip of pollen tubes.

It localises to the cytoplasm. The protein localises to the membrane. Its function is as follows. Inactive GDP-bound Rho GTPases reside in the cytosol, are found in a complex with Rho GDP-dissociation inhibitors (Rho GDIs), and are released from the GDI protein in order to translocate to membranes upon activation. May be involved in cell polarity control during the actin-dependent tip growth of pollen tubes. The chain is Rac-like GTP-binding protein RHO1 (RHO1) from Pisum sativum (Garden pea).